We begin with the raw amino-acid sequence, 414 residues long: WW domain-containing oxidoreductase (414 aa).

The interval 1 to 24 is disordered; sequence MAALRYAGLDDTDSEDELPPGWEE. Threonine 12 carries the post-translational modification Phosphothreonine. The residue at position 14 (serine 14) is a Phosphoserine. In terms of domain architecture, WW 1 spans 16–49; it reads DELPPGWEERTTKDGWVYYANHTEEKTQWEHPKT. Tyrosine 33 carries the phosphotyrosine modification. Positions 50-55 match the Nuclear localization signal motif; that stretch reads GKRKRV. Residues 57–90 enclose the WW 2 domain; sequence GDLPYGWEQGTDENGQVFFVDHINKRTTYLDPRL. An interaction with MAPT region spans residues 125–414; sequence KVVVVTGANS…IQERLGSQSG (290 aa). 131–137 is a binding site for NADP(+); that stretch reads GANSGIG. Residues 209 to 273 are mediates targeting to the mitochondria; that stretch reads CNAATFALPW…RFTDINDSLG (65 aa). Residue serine 260 coordinates substrate. Tyrosine 287 carries the post-translational modification Phosphotyrosine; by TNK2. The active-site Proton acceptor is the tyrosine 293.

The protein belongs to the short-chain dehydrogenases/reductases (SDR) family. Interacts with TP53, p73/TP73 and MAPK8. Interacts with MAPT/TAU, RUNX2 and HYAL2. Forms a ternary complex with TP53 and MDM2. Interacts with ERBB4, LITAF and WBP1. Interacts with DVL1, DVL2 and DVL3. May interact with FAM189B and SCOTIN. Interacts with TNK2. Interacts with TMEM207. Interacts (via WW domain) with VOPP1. Post-translationally, phosphorylated upon genotoxic stress. Phosphorylation of Tyr-33 regulates interaction with TP53, TP73 and MAPK8. May also regulate proapoptotic activity. Phosphorylation by TNK2 is associated with polyubiquitination and degradation. In terms of processing, ubiquitinated when phosphorylated by TNK2, leading to its degradation.

The protein resides in the cytoplasm. Its subcellular location is the nucleus. It is found in the mitochondrion. The protein localises to the golgi apparatus. It localises to the lysosome. Its function is as follows. Putative oxidoreductase. Acts as a tumor suppressor and plays a role in apoptosis. May function synergistically with p53/TP53 to control genotoxic stress-induced cell death. Plays a role in TGFB1 signaling and TGFB1-mediated cell death. May also play a role in tumor necrosis factor (TNF)-mediated cell death. Required for normal bone development. Inhibits Wnt signaling, probably by sequestering DVL2 in the cytoplasm. The sequence is that of WW domain-containing oxidoreductase (WWOX) from Pongo abelii (Sumatran orangutan).